Consider the following 343-residue polypeptide: Phenylalanine--tRNA ligase alpha subunit (343 aa).

Residue Glu-258 coordinates Mg(2+).

This sequence belongs to the class-II aminoacyl-tRNA synthetase family. Phe-tRNA synthetase alpha subunit type 1 subfamily. Tetramer of two alpha and two beta subunits. Requires Mg(2+) as cofactor.

Its subcellular location is the cytoplasm. The catalysed reaction is tRNA(Phe) + L-phenylalanine + ATP = L-phenylalanyl-tRNA(Phe) + AMP + diphosphate + H(+). In Symbiobacterium thermophilum (strain DSM 24528 / JCM 14929 / IAM 14863 / T), this protein is Phenylalanine--tRNA ligase alpha subunit.